The chain runs to 479 residues: Calcium/calmodulin-dependent protein kinase type II delta chain (479 aa).

Residues 14-272 (YQLFEELGKG…ASEALKHPWI (259 aa)) enclose the Protein kinase domain. ATP-binding positions include 20–28 (LGKGAFSVV) and lysine 43. Residue aspartate 136 is the Proton acceptor of the active site. A Phosphothreonine modification is found at threonine 287. A phosphoserine mark is found at serine 315 and serine 319. Position 337 is a phosphothreonine (threonine 337).

This sequence belongs to the protein kinase superfamily. CAMK Ser/Thr protein kinase family. CaMK subfamily. In terms of assembly, CAMK2 is composed of four different chains: alpha, beta, gamma, and delta. The different isoforms assemble into homo- or heteromultimeric holoenzymes composed of 8 to 12 subunits.

It catalyses the reaction L-seryl-[protein] + ATP = O-phospho-L-seryl-[protein] + ADP + H(+). It carries out the reaction L-threonyl-[protein] + ATP = O-phospho-L-threonyl-[protein] + ADP + H(+). Autophosphorylation of CAMK2 plays an important role in the regulation of the kinase activity. In terms of biological role, caM-kinase II (CAMK2) is a prominent kinase in the central nervous system. This Gallus gallus (Chicken) protein is Calcium/calmodulin-dependent protein kinase type II delta chain (CAMK2D).